The chain runs to 362 residues: Phosphoserine aminotransferase (362 aa).

Arg42 is an L-glutamate binding site. Residues 76–77, Trp102, Thr153, Asp174, and Gln197 each bind pyridoxal 5'-phosphate; that span reads AR. Lys198 is modified (N6-(pyridoxal phosphate)lysine). 239–240 serves as a coordination point for pyridoxal 5'-phosphate; the sequence is NT.

This sequence belongs to the class-V pyridoxal-phosphate-dependent aminotransferase family. SerC subfamily. Homodimer. Requires pyridoxal 5'-phosphate as cofactor.

The protein resides in the cytoplasm. It carries out the reaction O-phospho-L-serine + 2-oxoglutarate = 3-phosphooxypyruvate + L-glutamate. The catalysed reaction is 4-(phosphooxy)-L-threonine + 2-oxoglutarate = (R)-3-hydroxy-2-oxo-4-phosphooxybutanoate + L-glutamate. It participates in amino-acid biosynthesis; L-serine biosynthesis; L-serine from 3-phospho-D-glycerate: step 2/3. It functions in the pathway cofactor biosynthesis; pyridoxine 5'-phosphate biosynthesis; pyridoxine 5'-phosphate from D-erythrose 4-phosphate: step 3/5. Its function is as follows. Catalyzes the reversible conversion of 3-phosphohydroxypyruvate to phosphoserine and of 3-hydroxy-2-oxo-4-phosphonooxybutanoate to phosphohydroxythreonine. The polypeptide is Phosphoserine aminotransferase (Xenorhabdus nematophila (strain ATCC 19061 / DSM 3370 / CCUG 14189 / LMG 1036 / NCIMB 9965 / AN6)).